The sequence spans 60 residues: Large ribosomal subunit protein uL30 (60 aa).

This sequence belongs to the universal ribosomal protein uL30 family. In terms of assembly, part of the 50S ribosomal subunit.

This chain is Large ribosomal subunit protein uL30, found in Levilactobacillus brevis (strain ATCC 367 / BCRC 12310 / CIP 105137 / JCM 1170 / LMG 11437 / NCIMB 947 / NCTC 947) (Lactobacillus brevis).